The chain runs to 303 residues: Glycine--tRNA ligase alpha subunit (303 aa).

The protein belongs to the class-II aminoacyl-tRNA synthetase family. As to quaternary structure, tetramer of two alpha and two beta subunits.

Its subcellular location is the cytoplasm. It catalyses the reaction tRNA(Gly) + glycine + ATP = glycyl-tRNA(Gly) + AMP + diphosphate. The chain is Glycine--tRNA ligase alpha subunit from Salmonella arizonae (strain ATCC BAA-731 / CDC346-86 / RSK2980).